The chain runs to 273 residues: Large ribosomal subunit protein uL2 (273 aa).

The tract at residues 223–273 (VVMNPVDHPMGGGEGRSSGGRHPCTPWGVPTKGHKTRSNKSTDKYIVKRRG) is disordered. Residues 262–273 (KSTDKYIVKRRG) are compositionally biased toward basic and acidic residues.

It belongs to the universal ribosomal protein uL2 family. As to quaternary structure, part of the 50S ribosomal subunit. Forms a bridge to the 30S subunit in the 70S ribosome.

One of the primary rRNA binding proteins. Required for association of the 30S and 50S subunits to form the 70S ribosome, for tRNA binding and peptide bond formation. It has been suggested to have peptidyltransferase activity; this is somewhat controversial. Makes several contacts with the 16S rRNA in the 70S ribosome. The chain is Large ribosomal subunit protein uL2 from Syntrophus aciditrophicus (strain SB).